The primary structure comprises 120 residues: Eukaryotic translation initiation factor 4E-binding protein 2 (120 aa).

2 positions are modified to phosphothreonine; by MTOR: Thr-37 and Thr-46. A YXXXXLphi motif motif is present at residues 54-60; that stretch reads YDRKFLL. Ser-65 carries the phosphoserine; by MTOR modification. Thr-70 is modified (phosphothreonine; by MTOR). Residue Ser-83 is modified to Phosphoserine. Deamidated asparagine is present on residues Asn-99 and Asn-102. Residues 116 to 120 carry the TOS motif motif; the sequence is FEMDI.

Belongs to the eIF4E-binding protein family. Hypophosphorylated EIF4EBP2 interacts with EIF4E; phosphorylation of EIF4EBP2 by mTORC1 causes dissociation of the complex allowing EIF4G1/EIF4G3 to bind and consequent initiation of translation. Interacts (via TOS motif) with RPTOR; promoting phosphorylation by mTORC1. Interacts with PCMT1; required to prevent isoaspartate accumulation and convert isoaspartate to Asp. In terms of processing, phosphorylation at Thr-37, Thr-46, Ser-65, Thr-70 and Ser-83 is mediated by MTOR and corresponds to the hyperphosphorylated form: it abolishes binding to EIF4E by inducing folding of intrinsically disordered regions. First phosphorylated at Thr-37 and Thr-46 by MTOR, inducing folding of region encompassing residues from Pro-18 to Arg-62 of into a four-stranded beta-domain that sequesters the helical YXXXXLPhi motif into a partly buried beta-strand, blocking accessibility to EIF4E. Protein phosphorylated at Thr-37 and Thr-46 is however unstable and subsequent phosphorylation at Ser-65, Thr-70 and Ser-83 is required to stabilize the fold, decreasing affinity for EIF4E by a factor of 4000. Phosphorylated in response to insulin, EGF and PDGF. Post-translationally, deamidated at Asn-99 and Asn-102 to aspartate (Asp) in brain. Deamidation promotes interaction with RPTOR, subsequent phosphorylation by mTORC1 and increased translation, leading to impair kinetics of excitatory synaptic transmission. Deamidation takes place during postnatal development, when the PI3K-Akt-mTOR signaling is reduced, suggesting it acts as a compensatory mechanism to promote translation despite attenuated PI3K-Akt-mTOR signaling in neuron development. Deamidation converts Asn residues into a mixture of Asp and isoaspartate; interactions with PCMT1 is required to prevent isoaspartate accumulation and convert isoaspartate to Asp. As to expression, enriched in brain.

Its subcellular location is the cytoplasm. The protein resides in the nucleus. Its function is as follows. Repressor of translation initiation involved in synaptic plasticity, learning and memory formation. Regulates EIF4E activity by preventing its assembly into the eIF4F complex: hypophosphorylated form of EIF4EBP2 competes with EIF4G1/EIF4G3 and strongly binds to EIF4E, leading to repress translation. In contrast, hyperphosphorylated form dissociates from EIF4E, allowing interaction between EIF4G1/EIF4G3 and EIF4E, leading to initiation of translation. EIF4EBP2 is enriched in brain and acts as a regulator of synapse activity and neuronal stem cell renewal via its ability to repress translation initiation. Mediates the regulation of protein translation by hormones, growth factors and other stimuli that signal through the MAP kinase and mTORC1 pathways. The polypeptide is Eukaryotic translation initiation factor 4E-binding protein 2 (Mus musculus (Mouse)).